Consider the following 206-residue polypeptide: Urease accessory protein UreG (206 aa).

12–19 (GPVGSGKT) contributes to the GTP binding site.

The protein belongs to the SIMIBI class G3E GTPase family. UreG subfamily. Homodimer. UreD, UreF and UreG form a complex that acts as a GTP-hydrolysis-dependent molecular chaperone, activating the urease apoprotein by helping to assemble the nickel containing metallocenter of UreC. The UreE protein probably delivers the nickel.

Its subcellular location is the cytoplasm. In terms of biological role, facilitates the functional incorporation of the urease nickel metallocenter. This process requires GTP hydrolysis, probably effectuated by UreG. This Synechocystis sp. (strain ATCC 27184 / PCC 6803 / Kazusa) protein is Urease accessory protein UreG.